Reading from the N-terminus, the 100-residue chain is Urease subunit gamma (100 aa).

Belongs to the urease gamma subunit family. As to quaternary structure, heterotrimer of UreA (gamma), UreB (beta) and UreC (alpha) subunits. Three heterotrimers associate to form the active enzyme.

It is found in the cytoplasm. The enzyme catalyses urea + 2 H2O + H(+) = hydrogencarbonate + 2 NH4(+). The protein operates within nitrogen metabolism; urea degradation; CO(2) and NH(3) from urea (urease route): step 1/1. The chain is Urease subunit gamma from Streptomyces avermitilis (strain ATCC 31267 / DSM 46492 / JCM 5070 / NBRC 14893 / NCIMB 12804 / NRRL 8165 / MA-4680).